We begin with the raw amino-acid sequence, 115 residues long: Tyrosine-protein phosphatase 24 (115 aa).

The Tyrosine-protein phosphatase domain occupies 1-115; sequence WMMIVEQKCR…ETGSDAPMVV (115 aa). Asp83 is a substrate binding site.

This sequence belongs to the protein-tyrosine phosphatase family.

It catalyses the reaction O-phospho-L-tyrosyl-[protein] + H2O = L-tyrosyl-[protein] + phosphate. The protein is Tyrosine-protein phosphatase 24 (STY-24) of Styela plicata (Wrinkled sea squirt).